A 172-amino-acid chain; its full sequence is Shikimate kinase (172 aa).

14–19 (GAGKST) is a binding site for ATP. Residue Ser-18 participates in Mg(2+) binding. Substrate is bound by residues Asp-36, Arg-60, and Gly-82. Position 120 (Arg-120) interacts with ATP. Residue Arg-140 participates in substrate binding. Gln-157 lines the ATP pocket.

Belongs to the shikimate kinase family. Monomer. The cofactor is Mg(2+).

The protein resides in the cytoplasm. The catalysed reaction is shikimate + ATP = 3-phosphoshikimate + ADP + H(+). It functions in the pathway metabolic intermediate biosynthesis; chorismate biosynthesis; chorismate from D-erythrose 4-phosphate and phosphoenolpyruvate: step 5/7. Functionally, catalyzes the specific phosphorylation of the 3-hydroxyl group of shikimic acid using ATP as a cosubstrate. The sequence is that of Shikimate kinase from Pseudoalteromonas translucida (strain TAC 125).